The sequence spans 450 residues: Probable ECA polymerase (450 aa).

The next 11 helical transmembrane spans lie at 6–26, 37–57, 63–83, 118–138, 155–175, 181–201, 207–227, 228–248, 341–361, 378–398, and 410–430; these read FSGL…LTWF, VFFS…TSVL, VGVA…CFYA, VILM…NGFL, GVAL…VYFL, AWLF…MIVG, IIIA…ISLW, MLAA…LKRY, LVVM…GLII, YKAA…IVLA, and VFFI…YWLF.

The protein belongs to the WzyE family. As to quaternary structure, probably part of a complex composed of WzxE, WzyE and WzzE.

It is found in the cell inner membrane. The protein operates within bacterial outer membrane biogenesis; enterobacterial common antigen biosynthesis. Functionally, probably involved in the polymerization of enterobacterial common antigen (ECA) trisaccharide repeat units. The chain is Probable ECA polymerase from Escherichia coli O127:H6 (strain E2348/69 / EPEC).